The chain runs to 105 residues: Iron-sulfur cluster assembly protein CyaY (105 aa).

It belongs to the frataxin family.

In terms of biological role, involved in iron-sulfur (Fe-S) cluster assembly. May act as a regulator of Fe-S biogenesis. The sequence is that of Iron-sulfur cluster assembly protein CyaY from Paraburkholderia xenovorans (strain LB400).